The chain runs to 530 residues: MEQLLAQLHTCSELIAEGYSSTGNIGWLNEFCATFLDFASDLKARLPEVAPSGANLDVETIFLCLTQVVTCITHLERTISMEAPHMTRQHFLDRLDWCLRRLLVSLTQLEGNVTPVKNLEDHSFVELMDLALDHLDDYMEKLAQQRNNSLHILEESFTEDTYQLASIVNHIVRHALAFANVAIHSDKKALTALCETLLAECATFHEEAGEPNSGHRKLEALSLERALYALESFLNEALLHLLFVSLIDLENASVEKLKDALQRDPAGAQELISAFDTNMDRIQQIGVLAIAFSQDIKTKTIVRSCLASLESLDACIVPALQLPESTSSAHHAEVLQEHFNQELLIFRNVIHEIIDSCSLINNYLDMLGERIHVQDKSHLKLIVQRGGVVVDHFRLPVNYSGLSEDGKRVHKDLILILRECQAVVNLDVPVDPKRIVKRLKILYSVLAKLRDLICRDNLEPDSSVASEAQVPSSATRTFVRSSRSFGKRHRSFVKQTGNCSVFGPQDSLAESGHSESDLISFQITEILRLD.

In terms of tissue distribution, transient expression in blastoderm from nuclear cycle 11 to the onset of gastrulation.

The protein localises to the cytoplasm. It localises to the cell membrane. Functionally, required for the cellularization of the syncytial blastoderm embryo. Involved in the localization of the actin filaments just prior to and during plasma membrane invagination. Sry-alpha together with nullo and bnk may provide auxiliary functions, by acting both to stabilize a large and dynamic microfilament structure and regulate its functions. This chain is Serendipity locus protein alpha (Sry-alpha), found in Drosophila melanogaster (Fruit fly).